The chain runs to 117 residues: Large ribosomal subunit protein bL20 (117 aa).

Belongs to the bacterial ribosomal protein bL20 family.

Functionally, binds directly to 23S ribosomal RNA and is necessary for the in vitro assembly process of the 50S ribosomal subunit. It is not involved in the protein synthesizing functions of that subunit. This is Large ribosomal subunit protein bL20 from Campylobacter hominis (strain ATCC BAA-381 / DSM 21671 / CCUG 45161 / LMG 19568 / NCTC 13146 / CH001A).